The primary structure comprises 252 residues: Chitooligosaccharide deacetylase (252 aa).

Positions 61 and 125 each coordinate Mg(2+).

It belongs to the YdjC deacetylase family. ChbG subfamily. Homodimer. Mg(2+) serves as cofactor.

It is found in the cytoplasm. It catalyses the reaction N,N'-diacetylchitobiose + H2O = N-acetyl-beta-D-glucosaminyl-(1-&gt;4)-D-glucosamine + acetate. It carries out the reaction diacetylchitobiose-6'-phosphate + H2O = N'-monoacetylchitobiose-6'-phosphate + acetate. It participates in glycan degradation; chitin degradation. Its function is as follows. Involved in the degradation of chitin. ChbG is essential for growth on the acetylated chitooligosaccharides chitobiose and chitotriose but is dispensable for growth on cellobiose and chitosan dimer, the deacetylated form of chitobiose. Deacetylation of chitobiose-6-P and chitotriose-6-P is necessary for both the activation of the chb promoter by the regulatory protein ChbR and the hydrolysis of phosphorylated beta-glucosides by the phospho-beta-glucosidase ChbF. Catalyzes the removal of only one acetyl group from chitobiose-6-P to yield monoacetylchitobiose-6-P, the inducer of ChbR and the substrate of ChbF. In Salmonella paratyphi B (strain ATCC BAA-1250 / SPB7), this protein is Chitooligosaccharide deacetylase.